The sequence spans 105 residues: Small ribosomal subunit protein uS10c (105 aa).

This sequence belongs to the universal ribosomal protein uS10 family. In terms of assembly, part of the 30S ribosomal subunit.

It localises to the plastid. The protein resides in the chloroplast. Involved in the binding of tRNA to the ribosomes. In Porphyra purpurea (Red seaweed), this protein is Small ribosomal subunit protein uS10c.